The following is a 203-amino-acid chain: Large ribosomal subunit protein bL25 (203 aa).

It belongs to the bacterial ribosomal protein bL25 family. CTC subfamily. As to quaternary structure, part of the 50S ribosomal subunit; part of the 5S rRNA/L5/L18/L25 subcomplex. Contacts the 5S rRNA. Binds to the 5S rRNA independently of L5 and L18.

In terms of biological role, this is one of the proteins that binds to the 5S RNA in the ribosome where it forms part of the central protuberance. The sequence is that of Large ribosomal subunit protein bL25 from Rickettsia rickettsii (strain Iowa).